The chain runs to 201 residues: Large ribosomal subunit protein uL4 (201 aa).

The disordered stretch occupies residues 43-71; that stretch reads TRAQKTRSEVSGGGKKPWAQKGTGRARAG.

The protein belongs to the universal ribosomal protein uL4 family. As to quaternary structure, part of the 50S ribosomal subunit.

In terms of biological role, one of the primary rRNA binding proteins, this protein initially binds near the 5'-end of the 23S rRNA. It is important during the early stages of 50S assembly. It makes multiple contacts with different domains of the 23S rRNA in the assembled 50S subunit and ribosome. Its function is as follows. Forms part of the polypeptide exit tunnel. This is Large ribosomal subunit protein uL4 from Pseudoalteromonas translucida (strain TAC 125).